The primary structure comprises 912 residues: Brevican core protein (912 aa).

The first 22 residues, Met1–Ala22, serve as a signal peptide directing secretion. The region spanning Arg36–Lys155 is the Ig-like V-type domain. Cystine bridges form between Cys57/Cys137, Cys179/Cys250, Cys203/Cys224, Cys277/Cys352, and Cys301/Cys322. Residue Asn130 is glycosylated (N-linked (GlcNAc...) asparagine). Link domains lie at Val157–Ala252 and Gly257–Arg354. N-linked (GlcNAc...) asparagine glycosylation occurs at Asn337. 2 disordered regions span residues Ile408 to Ala427 and Ser438 to Cys651. At Ser418 the chain carries Phosphoserine. O-linked (Xyl...) (chondroitin sulfate) serine glycosylation is present at Ser418. Residues Glu448 to Glu463 show a composition bias toward basic and acidic residues. The segment covering Glu464–Ala478 has biased composition (acidic residues). Pro residues predominate over residues Val520–Leu537. Residues Gly603–Arg617 are compositionally biased toward basic and acidic residues. The EGF-like domain occupies Ser647 to Asp683. Cystine bridges form between Cys651–Cys662, Cys656–Cys671, Cys673–Cys682, Cys689–Cys700, Cys717–Cys809, Cys785–Cys801, Cys816–Cys859, and Cys845–Cys872. A C-type lectin domain is found at Asp683–Met811. The 61-residue stretch at Val814 to Pro874 folds into the Sushi domain.

Belongs to the aggrecan/versican proteoglycan family. Interacts with TNR. O-glycosylated; contains chondroitin sulfate. In terms of tissue distribution, brain; expressed in cerebellar astrocytes but not in neurons.

It is found in the secreted. The protein resides in the extracellular space. It localises to the extracellular matrix. Its function is as follows. May play a role in the terminally differentiating and the adult nervous system during postnatal development. Could stabilize interactions between hyaluronan (HA) and brain proteoglycans. In Bos taurus (Bovine), this protein is Brevican core protein (BCAN).